We begin with the raw amino-acid sequence, 117 residues long: MVQRLTYRRRLSYNTASNKTRLSRTPGQQDRLPLHQEGRESTYIRMWRVPRQTARGPCCETQVLMRLSKTKKHVSRAYGGSMCAKCVRDRIKRAFLIEEQKIVVKVLKAQAQSQKAK.

Ser12 carries the phosphoserine modification. Positions 16–28 (ASNKTRLSRTPGQ) are enriched in polar residues. Positions 16–35 (ASNKTRLSRTPGQQDRLPLH) are disordered. Lys108 is covalently cross-linked (Glycyl lysine isopeptide (Lys-Gly) (interchain with G-Cter in SUMO2)).

The protein belongs to the eukaryotic ribosomal protein eL34 family. In terms of assembly, component of the large ribosomal subunit.

The protein localises to the cytoplasm. It is found in the cytosol. It localises to the endoplasmic reticulum. Functionally, component of the large ribosomal subunit. The ribosome is a large ribonucleoprotein complex responsible for the synthesis of proteins in the cell. The polypeptide is Large ribosomal subunit protein eL34 (RPL34) (Vicugna pacos (Alpaca)).